Here is a 119-residue protein sequence, read N- to C-terminus: Ribonuclease P protein component (119 aa).

It belongs to the RnpA family. In terms of assembly, consists of a catalytic RNA component (M1 or rnpB) and a protein subunit.

It catalyses the reaction Endonucleolytic cleavage of RNA, removing 5'-extranucleotides from tRNA precursor.. Functionally, RNaseP catalyzes the removal of the 5'-leader sequence from pre-tRNA to produce the mature 5'-terminus. It can also cleave other RNA substrates such as 4.5S RNA. The protein component plays an auxiliary but essential role in vivo by binding to the 5'-leader sequence and broadening the substrate specificity of the ribozyme. In Edwardsiella ictaluri (strain 93-146), this protein is Ribonuclease P protein component.